A 21-amino-acid chain; its full sequence is Dahlein-5.5 (21 aa).

Expressed by the skin dorsal glands.

The protein resides in the secreted. Its function is as follows. Has no antimicrobial activity. Strongly inhibits the formation of NO by neuronal nitric oxide synthase at micromolar concentrations. The sequence is that of Dahlein-5.5 from Ranoidea dahlii (Dahl's aquatic frog).